A 143-amino-acid polypeptide reads, in one-letter code: Large ribosomal subunit protein mL51 (143 aa).

The transit peptide at 1–52 (MAALVRGLMRRVAALPQAVRSVSGGGQRHEPYRPLPITSPLAGLPRNFRVRE) directs the protein to the mitochondrion.

This sequence belongs to the mitochondrion-specific ribosomal protein mL51 family. As to quaternary structure, component of the mitochondrial ribosome large subunit (39S) which comprises a 16S rRNA and about 50 distinct proteins.

Its subcellular location is the mitochondrion. This chain is Large ribosomal subunit protein mL51 (MRPL51), found in Gallus gallus (Chicken).